We begin with the raw amino-acid sequence, 179 residues long: Large ribosomal subunit protein uL5 (179 aa).

This sequence belongs to the universal ribosomal protein uL5 family. Part of the 50S ribosomal subunit; part of the 5S rRNA/L5/L18/L25 subcomplex. Contacts the 5S rRNA and the P site tRNA. Forms a bridge to the 30S subunit in the 70S ribosome.

This is one of the proteins that bind and probably mediate the attachment of the 5S RNA into the large ribosomal subunit, where it forms part of the central protuberance. In the 70S ribosome it contacts protein S13 of the 30S subunit (bridge B1b), connecting the 2 subunits; this bridge is implicated in subunit movement. Contacts the P site tRNA; the 5S rRNA and some of its associated proteins might help stabilize positioning of ribosome-bound tRNAs. The sequence is that of Large ribosomal subunit protein uL5 from Bdellovibrio bacteriovorus (strain ATCC 15356 / DSM 50701 / NCIMB 9529 / HD100).